The primary structure comprises 488 residues: Integrin beta-like protein 1 (488 aa).

The first 21 residues, 1 to 21 (MHAGAFINFVWALSLVSLLAA), serve as a signal peptide directing secretion. 40 cysteine pairs are disulfide-bonded: cysteine 38–cysteine 65, cysteine 49–cysteine 63, cysteine 57–cysteine 68, cysteine 70–cysteine 83, cysteine 85–cysteine 106, cysteine 90–cysteine 104, cysteine 98–cysteine 109, cysteine 111–cysteine 120, cysteine 126–cysteine 153, cysteine 137–cysteine 151, cysteine 145–cysteine 156, cysteine 158–cysteine 172, cysteine 174–cysteine 196, cysteine 179–cysteine 194, cysteine 188–cysteine 199, cysteine 201–cysteine 210, cysteine 214–cysteine 241, cysteine 225–cysteine 239, cysteine 233–cysteine 244, cysteine 246–cysteine 263, cysteine 265–cysteine 290, cysteine 270–cysteine 288, cysteine 282–cysteine 293, cysteine 295–cysteine 304, cysteine 310–cysteine 337, cysteine 321–cysteine 335, cysteine 329–cysteine 340, cysteine 342–cysteine 355, cysteine 357–cysteine 378, cysteine 362–cysteine 376, cysteine 370–cysteine 381, cysteine 383–cysteine 392, cysteine 398–cysteine 425, cysteine 409–cysteine 423, cysteine 417–cysteine 428, cysteine 430–cysteine 442, cysteine 444–cysteine 465, cysteine 449–cysteine 463, cysteine 457–cysteine 468, and cysteine 470–cysteine 479. I-EGF domains follow at residues 38 to 84 (CRLP…PLCE), 85 to 121 (CHDWVCHTYDGQVCAGHGQCDCGVCKCDVGWSGEACQ), 126 to 173 (CDLT…KYCE), 174 to 211 (CDDTECFDDETQEICGGHGKCYCGNCYCEAGWHGDKCE), 214 to 264 (CDIT…DTCE), 265 to 305 (CDER…RKCE), 310 to 356 (CALS…KNCE), 357 to 393 (CDDRQCEDLEGKICGEHGTCSCGRCICEAGWFGKLCQ), 398 to 443 (CNMT…EFCE), and 444 to 480 (CDDRDCDKHDGLICTGNGICNCGNCECWEGWNGNACE). The stretch at 49–89 (CRTPDGSICSGRGSCDCGICLCEVKEAGKYYGPLCECHDWV) is one I repeat. The segment at 49 to 488 (CRTPDGSICS…CEIWLGSEYP (440 aa)) is cysteine-rich tandem repeats. An II repeat occupies 90-136 (CHTYDGQVCAGHGQCDCGVCKCDVGWSGEACQYPTTCDLTRKKSNEM). An III repeat occupies 137 to 178 (CKNSQAVICSNAGTCQCGRCKCENSDNSGLIYGKYCECDDTE). The stretch at 179 to 224 (CFDDETQEICGGHGKCYCGNCYCEAGWHGDKCEFQCDITPWEIKKR) is one IV repeat. The V repeat unit spans residues 225-269 (CTSPDGKICSNRGTCVCGECTCHDVDPTGDWGDIHGDTCECDERN). The stretch at 270–320 (CKSVYDRYSDDFCSGHGQCNCGRCDCKDGWTGRKCEHPRACALSIEESKKK) is one VI repeat. Residues 321 to 361 (CQGSASQPCSGRGKCECGQCTCFPPGDSKVYGKNCECDDRQ) form a VII repeat. The VIII repeat unit spans residues 362–408 (CEDLEGKICGEHGTCSCGRCICEAGWFGKLCQHERKCNMTEEESKSQ). An N-linked (GlcNAc...) asparagine glycan is attached at asparagine 399. The IX repeat unit spans residues 409-448 (CESDDGILCSGKGSCHCGKCICSPQEWYVSGEFCECDDRD). A X repeat occupies 449–488 (CDKHDGLICTGNGICNCGNCECWEGWNGNACEIWLGSEYP).

The protein resides in the secreted. The chain is Integrin beta-like protein 1 (itgbl1) from Xenopus laevis (African clawed frog).